A 283-amino-acid chain; its full sequence is uncharacterized protein (283 aa).

4 helical membrane-spanning segments follow: residues 11 to 31, 35 to 55, 56 to 76, and 93 to 113; these read LFAYFSGLIAALSLFIYYVSA, EGALILCITFGVIAAGIWFGP, IYALAVTLIVLFVLGTLMMFF, and LVVWGIALLLFSFISGRIHDI. Residues 162–283 enclose the GGDEF domain; that stretch reads NSFVFLLLHM…LENEMMMNEL (122 aa).

It localises to the cell membrane. This is an uncharacterized protein from Bacillus subtilis (strain 168).